The following is a 236-amino-acid chain: Ubiquinone biosynthesis O-methyltransferase (236 aa).

4 residues coordinate S-adenosyl-L-methionine: Arg-36, Gly-56, Asp-77, and Met-125.

It belongs to the methyltransferase superfamily. UbiG/COQ3 family.

It catalyses the reaction a 3-demethylubiquinol + S-adenosyl-L-methionine = a ubiquinol + S-adenosyl-L-homocysteine + H(+). The enzyme catalyses a 3-(all-trans-polyprenyl)benzene-1,2-diol + S-adenosyl-L-methionine = a 2-methoxy-6-(all-trans-polyprenyl)phenol + S-adenosyl-L-homocysteine + H(+). It participates in cofactor biosynthesis; ubiquinone biosynthesis. Functionally, O-methyltransferase that catalyzes the 2 O-methylation steps in the ubiquinone biosynthetic pathway. This chain is Ubiquinone biosynthesis O-methyltransferase, found in Haemophilus ducreyi (strain 35000HP / ATCC 700724).